The chain runs to 203 residues: High-molecular weight cobalt-containing nitrile hydratase subunit alpha (203 aa).

4 residues coordinate Co(3+): cysteine 102, cysteine 105, serine 106, and cysteine 107.

Belongs to the nitrile hydratase subunit alpha family. As to quaternary structure, heterodimer of an alpha and a beta chain. Co(3+) serves as cofactor.

It catalyses the reaction an aliphatic primary amide = an aliphatic nitrile + H2O. Its function is as follows. NHase catalyzes the hydration of various nitrile compounds to the corresponding amides. The polypeptide is High-molecular weight cobalt-containing nitrile hydratase subunit alpha (nhhA) (Rhodococcus rhodochrous).